An 82-amino-acid chain; its full sequence is Small ribosomal subunit protein bS16 (82 aa).

Belongs to the bacterial ribosomal protein bS16 family.

The sequence is that of Small ribosomal subunit protein bS16 from Vibrio vulnificus (strain CMCP6).